Here is a 124-residue protein sequence, read N- to C-terminus: Small ribosomal subunit protein uS12 (124 aa).

The tract at residues 1–30 (MPTIQQLVRKGRRDKVAKVKTAALKGSPQR) is disordered. The residue at position 89 (D89) is a 3-methylthioaspartic acid. The disordered stretch occupies residues 105-124 (QGVKNRKQARSRYGAKKEKS). A compositionally biased stretch (basic residues) spans 108–118 (KNRKQARSRYG).

It belongs to the universal ribosomal protein uS12 family. As to quaternary structure, part of the 30S ribosomal subunit. Contacts proteins S8 and S17. May interact with IF1 in the 30S initiation complex.

Functionally, with S4 and S5 plays an important role in translational accuracy. Its function is as follows. Interacts with and stabilizes bases of the 16S rRNA that are involved in tRNA selection in the A site and with the mRNA backbone. Located at the interface of the 30S and 50S subunits, it traverses the body of the 30S subunit contacting proteins on the other side and probably holding the rRNA structure together. The combined cluster of proteins S8, S12 and S17 appears to hold together the shoulder and platform of the 30S subunit. The polypeptide is Small ribosomal subunit protein uS12 (Mycobacterium intracellulare).